The chain runs to 117 residues: UPF0342 protein LBUL_1430 (117 aa).

Belongs to the UPF0342 family.

This chain is UPF0342 protein LBUL_1430, found in Lactobacillus delbrueckii subsp. bulgaricus (strain ATCC BAA-365 / Lb-18).